The primary structure comprises 376 residues: 3-aminomethylindole N-methyltransferase (376 aa).

S-adenosyl-L-homocysteine contacts are provided by Gly220, Asp243, Asp263, and Met264.

Belongs to the class I-like SAM-binding methyltransferase superfamily. Cation-independent O-methyltransferase family. In terms of tissue distribution, more present in the fifth leaf than in the second leaf (at protein level).

It carries out the reaction 3-(aminomethyl)indole + 2 S-adenosyl-L-methionine = gramine + 2 S-adenosyl-L-homocysteine + 2 H(+). It participates in alkaloid biosynthesis. Its activity is regulated as follows. Repressed by sodium carbonate, sodium bicarbonate and K-phosphate. Methylates 3-aminomethylindole (AMI) and N-methyl-3-aminomethylindole (MAMI), two substrates involved in gramine biosynthesis, a toxic indole alkaloid. Can use S-adenosyl-L-methionine (AdoMet) as a methyl donor. Unable to mediate caffeic acid O-methylation. In Hordeum vulgare subsp. vulgare (Domesticated barley), this protein is 3-aminomethylindole N-methyltransferase.